A 694-amino-acid chain; its full sequence is Elongation factor G (694 aa).

A tr-type G domain is found at 6–288 (KLYRNIGIAA…GVIEYLPSPT (283 aa)). GTP is bound by residues 15 to 22 (AHVDAGKT), 86 to 90 (DTPGH), and 140 to 143 (NKMD).

The protein belongs to the TRAFAC class translation factor GTPase superfamily. Classic translation factor GTPase family. EF-G/EF-2 subfamily.

The protein localises to the cytoplasm. Its function is as follows. Catalyzes the GTP-dependent ribosomal translocation step during translation elongation. During this step, the ribosome changes from the pre-translocational (PRE) to the post-translocational (POST) state as the newly formed A-site-bound peptidyl-tRNA and P-site-bound deacylated tRNA move to the P and E sites, respectively. Catalyzes the coordinated movement of the two tRNA molecules, the mRNA and conformational changes in the ribosome. This chain is Elongation factor G, found in Legionella pneumophila (strain Corby).